The following is a 1119-amino-acid chain: Multiple epidermal growth factor-like domains protein 10 (1119 aa).

Positions 1-22 (MMSSCGPLLLAVSCCLVALTSS) are cleaved as a signal peptide. The Extracellular portion of the chain corresponds to 23–851 (LNLDDPNVCS…ALPMDSYQIG (829 aa)). In terms of domain architecture, EMI spans 27–104 (DPNVCSHWES…FYESGDICVP (78 aa)). Intrachain disulfides connect Cys31-Cys92, Cys57-Cys66, Cys91-Cys102, Cys102-Cys115, Cys106-Cys121, Cys123-Cys132, Cys145-Cys157, Cys151-Cys164, Cys166-Cys175, Cys188-Cys200, Cys194-Cys207, Cys209-Cys218, Cys231-Cys243, Cys237-Cys250, and Cys252-Cys260. 4 EGF-like domains span residues 98–133 (SGDICVPHCAEKCVHGRCVAPNTCQCEPGWGGADCS), 141–176 (WGPHCSSRCQCKNEALCNPITGACICAPGYHGWRCE), 184–219 (YGNNCQQKCLCQNNATCHHITGECVCSPGYTGAFCE), and 227–261 (HGQQCEERCPCQNGGVCHHVTGECSCPAGWGMVCG). Asn197 carries an N-linked (GlcNAc...) asparagine glycan. Asn272 carries N-linked (GlcNAc...) asparagine glycosylation. 2 consecutive EGF-like domains span residues 274–304 (SQECQCHNGGICSPSTGQCVCSSGYTGERCQ) and 312–347 (YGIGCSQACRCVNGAQCYHVSGACLCEQGYTGESCE). Intrachain disulfides connect Cys277/Cys285, Cys279/Cys292, Cys294/Cys303, Cys316/Cys328, Cys322/Cys335, and Cys337/Cys346. Asn369 and Asn393 each carry an N-linked (GlcNAc...) asparagine glycan. 9 consecutive EGF-like domains span residues 401-436 (YGEACQEVCRCQNGADCHSVSGECICAPGYKGSDCA), 444-479 (YGINCTSLCSCKNGAICSPIDGSCSCQAGWHGVDCS), 487-522 (WGLGCNLSCVCGNGGACNALDGKCTCTPGWRGDRCD), 573-608 (WGPNCSLSCNCKNSASCSPDEGACECAPGFRGTTCQ), 616-653 (FGHRCSQACPHCVHSNGPCHHVTGQCECLPGFKGALCN), 666-696 (GGSCTCTNNGTCSPMDGSCQCYPGWIGSDCS), 709-739 (IHTCNCHNGAFCSAYDGECKCTAGWTGLYCT), 747-782 (YGKDCVQACQCENGADCNHISGQCTCRTGFMGRHCE), and 795-825 (RQVCDCLNNSTCDHMTGTCYCNPGWKGTRCD). Cystine bridges form between Cys405–Cys417, Cys411–Cys424, and Cys426–Cys435. The N-linked (GlcNAc...) asparagine glycan is linked to Asn447. 6 cysteine pairs are disulfide-bonded: Cys448–Cys460, Cys454–Cys467, Cys469–Cys478, Cys491–Cys503, Cys497–Cys510, and Cys512–Cys521. A glycan (N-linked (GlcNAc...) asparagine) is linked at Asn492. N-linked (GlcNAc...) asparagine glycosylation occurs at Asn576. Intrachain disulfides connect Cys577–Cys589, Cys583–Cys596, Cys598–Cys607, Cys620–Cys634, Cys624–Cys641, Cys643–Cys652, Cys669–Cys677, Cys671–Cys684, Cys686–Cys695, Cys712–Cys720, Cys714–Cys727, Cys729–Cys738, Cys751–Cys763, Cys757–Cys770, Cys772–Cys781, Cys798–Cys806, Cys800–Cys813, and Cys815–Cys824. N-linked (GlcNAc...) asparagine glycosylation is present at Asn674. Residue Asn803 is glycosylated (N-linked (GlcNAc...) asparagine). The helical transmembrane segment at 852–872 (AITGIIILVLLVLILLLLFII) threads the bilayer. At 873–1119 (YRKKQKGKES…SSPSPTEDSK (247 aa)) the chain is on the cytoplasmic side.

The protein belongs to the MEGF family.

The protein localises to the cell membrane. Functionally, membrane receptor involved in phagocytosis by macrophages and astrocytes of apoptotic cells. Essential factor in the regulation of muscle development including myogenesis. Likely plays a key role in muscle cell proliferation, adhesion and motility. May control the balance between skeletal muscle satellite cells proliferation and differentiation through regulation of the notch signaling pathway. The protein is Multiple epidermal growth factor-like domains protein 10 of Danio rerio (Zebrafish).